The following is a 520-amino-acid chain: Aspartate-proton symporter (520 aa).

14 helical membrane passes run 13-33 (LFDL…LFAV), 49-69 (ILGG…GAAL), 85-105 (HLVG…LISI), 130-150 (TISG…LNYW), 161-181 (IISI…IFHF), 201-221 (AAIS…IVSV), 232-252 (IPIA…VLQV), 281-301 (IAVM…AILS), 345-365 (WLSF…NALV), 366-386 (NVCS…SAAL), 402-422 (MSII…WSGW), 425-445 (VSWL…FSKY), 460-480 (AWWL…GSFG), and 482-502 (GLGI…SLAI).

This sequence belongs to the amino acid-polyamine-organocation (APC) superfamily. AGT (TC 2.A.3.11) family.

It localises to the cell membrane. Functionally, uptake of L-aspartate with the concomitant import of a proton. Can also transport aspartate hydroxamate and L-glutamate with lower affinity and efficiency. This is Aspartate-proton symporter (yveA) from Bacillus subtilis (strain 168).